Here is a 294-residue protein sequence, read N- to C-terminus: uncharacterized protein (294 aa).

A disordered region spans residues 181-204; it reads DEPFPTTKNHNNDKRETNDKDDQQ. Residues 190–204 show a composition bias toward basic and acidic residues; sequence HNNDKRETNDKDDQQ.

The protein belongs to the IIV-6 391R family.

This is an uncharacterized protein from Acheta domesticus (House cricket).